An 85-amino-acid chain; its full sequence is uncharacterized protein (85 aa).

Disordered regions lie at residues 1–28 (MPQK…LRKA) and 35–54 (SKKK…SLTE). A compositionally biased stretch (basic residues) spans 35–48 (SKKKSLQHLKKLKK).

The protein localises to the nucleus. This is an uncharacterized protein from Saccharomyces cerevisiae (strain ATCC 204508 / S288c) (Baker's yeast).